The chain runs to 348 residues: Probable dual-specificity RNA methyltransferase RlmN (348 aa).

Glutamate 90 serves as the catalytic Proton acceptor. The Radical SAM core domain occupies alanine 96 to glutamate 324. A disulfide bridge links cysteine 103 with cysteine 329. Cysteine 110, cysteine 114, and cysteine 117 together coordinate [4Fe-4S] cluster. S-adenosyl-L-methionine is bound by residues glycine 157 to glutamate 158, serine 187, serine 210 to histidine 212, and asparagine 286. The S-methylcysteine intermediate role is filled by cysteine 329.

Belongs to the radical SAM superfamily. RlmN family. [4Fe-4S] cluster is required as a cofactor.

It is found in the cytoplasm. It catalyses the reaction adenosine(2503) in 23S rRNA + 2 reduced [2Fe-2S]-[ferredoxin] + 2 S-adenosyl-L-methionine = 2-methyladenosine(2503) in 23S rRNA + 5'-deoxyadenosine + L-methionine + 2 oxidized [2Fe-2S]-[ferredoxin] + S-adenosyl-L-homocysteine. The enzyme catalyses adenosine(37) in tRNA + 2 reduced [2Fe-2S]-[ferredoxin] + 2 S-adenosyl-L-methionine = 2-methyladenosine(37) in tRNA + 5'-deoxyadenosine + L-methionine + 2 oxidized [2Fe-2S]-[ferredoxin] + S-adenosyl-L-homocysteine. Specifically methylates position 2 of adenine 2503 in 23S rRNA and position 2 of adenine 37 in tRNAs. The protein is Probable dual-specificity RNA methyltransferase RlmN of Gloeobacter violaceus (strain ATCC 29082 / PCC 7421).